Here is a 317-residue protein sequence, read N- to C-terminus: Ribose-phosphate pyrophosphokinase (317 aa).

ATP is bound by residues 43–45 (DGE) and 102–103 (RQ). The Mg(2+) site is built by His136 and Asp175. Lys198 is a catalytic residue. Residues Arg200, Asp224, and 228–232 (DTAGT) each bind D-ribose 5-phosphate.

The protein belongs to the ribose-phosphate pyrophosphokinase family. Class I subfamily. Homohexamer. The cofactor is Mg(2+).

It localises to the cytoplasm. The enzyme catalyses D-ribose 5-phosphate + ATP = 5-phospho-alpha-D-ribose 1-diphosphate + AMP + H(+). It participates in metabolic intermediate biosynthesis; 5-phospho-alpha-D-ribose 1-diphosphate biosynthesis; 5-phospho-alpha-D-ribose 1-diphosphate from D-ribose 5-phosphate (route I): step 1/1. Its function is as follows. Involved in the biosynthesis of the central metabolite phospho-alpha-D-ribosyl-1-pyrophosphate (PRPP) via the transfer of pyrophosphoryl group from ATP to 1-hydroxyl of ribose-5-phosphate (Rib-5-P). In Corynebacterium ammoniagenes (Brevibacterium ammoniagenes), this protein is Ribose-phosphate pyrophosphokinase.